Consider the following 144-residue polypeptide: MAVSLPNSFLQISPCVPSLQLRKPVMAAVKGGKQSVRRSSNTVVQITCRKKELHPEFHEDAKVYCNGELVMTTGGTKKEYVVDVWSGNHPFYLGNRSALMVDADQVEKFRKRFAGLSEIMEIPVLKGEIIMPTKKSKGPKGKKK.

The transit peptide at methionine 1–cysteine 48 directs the protein to the chloroplast.

This sequence belongs to the bacterial ribosomal protein bL31 family. Type A subfamily. As to quaternary structure, part of the 50S ribosomal subunit.

The protein resides in the plastid. The protein localises to the chloroplast. Binds the 23S rRNA. The protein is Large ribosomal subunit protein bL31c (RPL31) of Arabidopsis thaliana (Mouse-ear cress).